Reading from the N-terminus, the 123-residue chain is Small ribosomal subunit protein uS13 (123 aa).

The protein belongs to the universal ribosomal protein uS13 family. In terms of assembly, part of the 30S ribosomal subunit. Forms a loose heterodimer with protein S19. Forms two bridges to the 50S subunit in the 70S ribosome.

In terms of biological role, located at the top of the head of the 30S subunit, it contacts several helices of the 16S rRNA. In the 70S ribosome it contacts the 23S rRNA (bridge B1a) and protein L5 of the 50S subunit (bridge B1b), connecting the 2 subunits; these bridges are implicated in subunit movement. Contacts the tRNAs in the A and P-sites. This chain is Small ribosomal subunit protein uS13, found in Anaplasma marginale (strain St. Maries).